The following is a 194-amino-acid chain: Cytochrome c oxidase assembly protein CtaG (194 aa).

Topologically, residues 1–12 (MALRGPAKTVAQ) are cytoplasmic. The chain crosses the membrane as a helical; Signal-anchor for type II membrane protein span at residues 13-35 (TVSVVIFMGALAWASVPLYDWFC). Residues 36–194 (RVTGFGGVTG…IEENSDTSLN (159 aa)) are Periplasmic-facing.

This sequence belongs to the COX11/CtaG family.

It is found in the cell inner membrane. Functionally, exerts its effect at some terminal stage of cytochrome c oxidase synthesis, probably by being involved in the insertion of the copper B into subunit I. This chain is Cytochrome c oxidase assembly protein CtaG, found in Roseobacter denitrificans (strain ATCC 33942 / OCh 114) (Erythrobacter sp. (strain OCh 114)).